The chain runs to 357 residues: Uroporphyrinogen decarboxylase (357 aa).

Substrate-binding positions include 27–31 (RQAGR), D77, Y154, T209, and H327.

Belongs to the uroporphyrinogen decarboxylase family. Homodimer.

The protein resides in the cytoplasm. It catalyses the reaction uroporphyrinogen III + 4 H(+) = coproporphyrinogen III + 4 CO2. The protein operates within porphyrin-containing compound metabolism; protoporphyrin-IX biosynthesis; coproporphyrinogen-III from 5-aminolevulinate: step 4/4. Its function is as follows. Catalyzes the decarboxylation of four acetate groups of uroporphyrinogen-III to yield coproporphyrinogen-III. This Nitrosococcus oceani (strain ATCC 19707 / BCRC 17464 / JCM 30415 / NCIMB 11848 / C-107) protein is Uroporphyrinogen decarboxylase.